We begin with the raw amino-acid sequence, 704 residues long: Ribosomal RNA large subunit methyltransferase K/L (704 aa).

The protein belongs to the methyltransferase superfamily. RlmKL family.

Its subcellular location is the cytoplasm. The catalysed reaction is guanosine(2445) in 23S rRNA + S-adenosyl-L-methionine = N(2)-methylguanosine(2445) in 23S rRNA + S-adenosyl-L-homocysteine + H(+). The enzyme catalyses guanosine(2069) in 23S rRNA + S-adenosyl-L-methionine = N(2)-methylguanosine(2069) in 23S rRNA + S-adenosyl-L-homocysteine + H(+). In terms of biological role, specifically methylates the guanine in position 2445 (m2G2445) and the guanine in position 2069 (m7G2069) of 23S rRNA. The chain is Ribosomal RNA large subunit methyltransferase K/L from Alcanivorax borkumensis (strain ATCC 700651 / DSM 11573 / NCIMB 13689 / SK2).